The chain runs to 615 residues: Chaperone protein HtpG (615 aa).

Residues 1–335 form an a; substrate-binding region; that stretch reads MSAEKQTHGF…APDLPLNVSR (335 aa). The interval 336-541 is b; it reads ELLQDYGPVQ…EDQLGPQMRR (206 aa). The segment at 542 to 615 is c; the sequence is MLEAAGQPVP…RMQALLSQSV (74 aa).

It belongs to the heat shock protein 90 family. As to quaternary structure, homodimer.

It is found in the cytoplasm. Functionally, molecular chaperone. Has ATPase activity. This is Chaperone protein HtpG from Alcanivorax borkumensis (strain ATCC 700651 / DSM 11573 / NCIMB 13689 / SK2).